A 131-amino-acid polypeptide reads, in one-letter code: Profilin (131 aa).

It belongs to the profilin family. As to quaternary structure, occurs in many kinds of cells as a complex with monomeric actin in a 1:1 ratio.

It localises to the cytoplasm. The protein resides in the cytoskeleton. Functionally, binds to actin and affects the structure of the cytoskeleton. At high concentrations, profilin prevents the polymerization of actin, whereas it enhances it at low concentrations. Has a high affinity for poly-proline. This Citrullus lanatus (Watermelon) protein is Profilin.